The chain runs to 37 residues: Large ribosomal subunit protein bL36 (37 aa).

This sequence belongs to the bacterial ribosomal protein bL36 family.

The polypeptide is Large ribosomal subunit protein bL36 (Tropheryma whipplei (strain Twist) (Whipple's bacillus)).